A 713-amino-acid polypeptide reads, in one-letter code: Calpastatin (713 aa).

A compositionally biased stretch (low complexity) spans 1 to 21; it reads MSRPGPKPAASSRPRRGAAAS. Residues 1–152 form a disordered region; it reads MSRPGPKPAA…SADGESVAGG (152 aa). Positions 47 to 64 are enriched in polar residues; the sequence is VTASSAATGTSPRMSTTG. Ser-57 bears the Phosphoserine mark. Lys-69 is covalently cross-linked (Glycyl lysine isopeptide (Lys-Gly) (interchain with G-Cter in SUMO2)). N6-acetyllysine is present on Lys-86. Residues 120-129 are compositionally biased toward polar residues; sequence SRSNEQIVSE. Ser-122 and Ser-171 each carry phosphoserine. Residue Thr-173 is modified to Phosphothreonine. An Inhibitory domain 1 repeat occupies 208-260; that stretch reads TNKDDPPYTGPVVLDPMDSTYLEALGIKEGTIPPEYRKLLEKNEAITGPLPDS. The tract at residues 253–402 is disordered; the sequence is ITGPLPDSPK…PEETSKCLSE (150 aa). A phosphoserine mark is found at Ser-260 and Ser-281. 3 stretches are compositionally biased toward polar residues: residues 275–285, 294–304, and 326–346; these read SDFTCSSPTGK, GESSKAQSAGV, and QALQ…QSHL. The Inhibitory domain 2 repeat unit spans residues 341–393; that stretch reads DPQSHLRQAKQVKEAKAKEERQEKCGEDEDTVPAEYRLKPAKDKDGKPLLPEP. Basic and acidic residues-rich tracts occupy residues 351-365 and 376-387; these read QVKE…QEKC and YRLKPAKDKDGK. 4 positions are modified to phosphoserine: Ser-401, Ser-403, Ser-410, and Ser-445. The disordered stretch occupies residues 442-507; the sequence is LARSLGTRKE…PLLPKEAEEQ (66 aa). A compositionally biased stretch (basic and acidic residues) spans 448–505; the sequence is TRKEDPEDEKSLVDKVKEKAKEEDHEKLGEKEETIPPDYRLEIVKDKDGKPLLPKEAE. One copy of the Inhibitory domain 3 repeat lies at 451–504; that stretch reads EDPEDEKSLVDKVKEKAKEEDHEKLGEKEETIPPDYRLEIVKDKDGKPLLPKEA. Ser-521 and Ser-532 each carry phosphoserine. Residues 544 to 558 are compositionally biased toward polar residues; sequence VSETVSQVPAPSNHT. Residues 544–713 form a disordered region; it reads VSETVSQVPA…PKPKVDEDAT (170 aa). Ser-580 and Ser-582 each carry phosphoserine. The Inhibitory domain 4 repeat unit spans residues 588-641; it reads PDPDENKPLDDKVKEKIKAEHSEKLGERDDTIPPEYRHLLDNDGKDKPEKPLTK. Basic and acidic residues-rich tracts occupy residues 588 to 648 and 687 to 713; these read PDPD…KLGQ and SKNE…EDAT.

Belongs to the protease inhibitor I27 (calpastatin) family.

Specific inhibition of calpain (calcium-dependent cysteine protease). Plays a key role in postmortem tenderization of meat and have been proposed to be involved in muscle protein degradation in living tissue. The polypeptide is Calpastatin (Cast) (Rattus norvegicus (Rat)).